The following is a 243-amino-acid chain: Pyridoxine 5'-phosphate synthase (243 aa).

A 3-amino-2-oxopropyl phosphate-binding site is contributed by Asn7. 9 to 10 (DH) provides a ligand contact to 1-deoxy-D-xylulose 5-phosphate. Arg18 is a binding site for 3-amino-2-oxopropyl phosphate. The active-site Proton acceptor is His43. Arg45 and His50 together coordinate 1-deoxy-D-xylulose 5-phosphate. Catalysis depends on Glu70, which acts as the Proton acceptor. Thr100 is a 1-deoxy-D-xylulose 5-phosphate binding site. The active-site Proton donor is His192. 3-amino-2-oxopropyl phosphate-binding positions include Gly193 and 215–216 (GF).

This sequence belongs to the PNP synthase family. Homooctamer; tetramer of dimers.

It localises to the cytoplasm. The catalysed reaction is 3-amino-2-oxopropyl phosphate + 1-deoxy-D-xylulose 5-phosphate = pyridoxine 5'-phosphate + phosphate + 2 H2O + H(+). It participates in cofactor biosynthesis; pyridoxine 5'-phosphate biosynthesis; pyridoxine 5'-phosphate from D-erythrose 4-phosphate: step 5/5. Functionally, catalyzes the complicated ring closure reaction between the two acyclic compounds 1-deoxy-D-xylulose-5-phosphate (DXP) and 3-amino-2-oxopropyl phosphate (1-amino-acetone-3-phosphate or AAP) to form pyridoxine 5'-phosphate (PNP) and inorganic phosphate. The sequence is that of Pyridoxine 5'-phosphate synthase from Salinibacter ruber (strain DSM 13855 / M31).